Consider the following 88-residue polypeptide: Small ribosomal subunit protein uS15 (88 aa).

It belongs to the universal ribosomal protein uS15 family. In terms of assembly, part of the 30S ribosomal subunit. Forms a bridge to the 50S subunit in the 70S ribosome, contacting the 23S rRNA.

Its function is as follows. One of the primary rRNA binding proteins, it binds directly to 16S rRNA where it helps nucleate assembly of the platform of the 30S subunit by binding and bridging several RNA helices of the 16S rRNA. Functionally, forms an intersubunit bridge (bridge B4) with the 23S rRNA of the 50S subunit in the ribosome. The chain is Small ribosomal subunit protein uS15 from Syntrophus aciditrophicus (strain SB).